Consider the following 594-residue polypeptide: Cryptochrome-2 (594 aa).

The Photolyase/cryptochrome alpha/beta domain occupies 21–150 (ASSVHWFRKG…EVVTENSHTL (130 aa)). A Glycyl lysine isopeptide (Lys-Gly) (interchain with G-Cter in ubiquitin) cross-link involves residue lysine 29. A Phosphoserine modification is found at serine 89. Residues lysine 125 and lysine 241 each participate in a glycyl lysine isopeptide (Lys-Gly) (interchain with G-Cter in ubiquitin) cross-link. Serine 265 carries the phosphoserine; by MAPK modification. Serine 270 is a binding site for FAD. Position 298 is a phosphoserine (serine 298). Glutamine 307 is an FAD binding site. A Glycyl lysine isopeptide (Lys-Gly) (interchain with G-Cter in ubiquitin) cross-link involves residue lysine 347. Residues histidine 373 and 405-407 (DAD) each bind FAD. Positions 389-488 (WVSWESGVRV…IIGVDYPRPI (100 aa)) are required for inhibition of CLOCK-BMAL1-mediated transcription. Glycyl lysine isopeptide (Lys-Gly) (interchain with G-Cter in ubiquitin) cross-links involve residues lysine 474 and lysine 503. The segment at 532–594 (VAEPGSSQAG…PAQEPPSKDS (63 aa)) is disordered. The span at 536 to 547 (GSSQAGSISNTG) shows a compositional bias: polar residues. Serine 553 bears the Phosphoserine; by GSK3-beta mark. The residue at position 557 (serine 557) is a Phosphoserine; by DYRK1A and MAPK.

Belongs to the DNA photolyase class-1 family. As to quaternary structure, component of the circadian core oscillator, which includes the CRY proteins, CLOCK or NPAS2, BMAL1 or BMAL2, CSNK1D and/or CSNK1E, TIMELESS, and the PER proteins. Interacts with TIMELESS. Interacts directly with PER1, PER2 and PER3; interaction with PER2 inhibits its ubiquitination and vice versa. Interacts with CLOCK-BMAL1. Interacts with CLOCK. Interacts with BMAL1. Interacts with NFIL3. Interacts with FBXL3 and FBXL21. FBXL3, PER2 and the cofactor FAD compete for overlapping binding sites. FBXL3 cannot bind CRY2 that interacts already with PER2 or that contains bound FAD. Interacts with PPP5C (via TPR repeats); the interaction down-regulates the PPP5C phosphatase activity on CSNK1E. Interacts with nuclear receptors AR and NR3C1/GR; the interaction is ligand dependent. Interacts with PRKDC and CIART. Interacts with DDB1, USP7 and TARDBP. Interacts with HNF4A and PPARA. Interacts with PPARD (via domain NR LBD) and NR1I2 (via domain NR LBD) in a ligand-dependent manner. Interacts with PPARG, NR1I3 and VDR in a ligand-dependent manner. Requires FAD as cofactor. It depends on (6R)-5,10-methylene-5,6,7,8-tetrahydrofolate as a cofactor. In terms of processing, phosphorylation on Ser-265 by MAPK is important for the inhibition of CLOCK-BMAL1-mediated transcriptional activity. Phosphorylation by CSKNe requires interaction with PER1 or PER2. Phosphorylated in a circadian manner at Ser-553 and Ser-557 in the suprachiasmatic nucleus (SCN) and liver. Phosphorylation at Ser-557 by DYRK1A promotes subsequent phosphorylation at Ser-553 by GSK3-beta: the two-step phosphorylation at the neighboring Ser residues leads to its proteasomal degradation. Ubiquitinated by the SCF(FBXL3) and SCF(FBXL21) complexes, regulating the balance between degradation and stabilization. The SCF(FBXL3) complex is mainly nuclear and mediates ubiquitination and subsequent degradation of CRY2. In contrast, cytoplasmic SCF(FBXL21) complex-mediated ubiquitination leads to stabilize CRY2 and counteract the activity of the SCF(FBXL3) complex. The SCF(FBXL3) and SCF(FBXL21) complexes probably mediate ubiquitination at different Lys residues. The SCF(FBXL3) complex recognizes and binds CRY2 phosphorylated at Ser-553 and Ser-557. Ubiquitination may be inhibited by PER2. Deubiquitinated by USP7. As to expression, expressed in all tissues examined including heart, cerebellum, cerebral cortex, lung, liver, muscle, kidney and ovary. Highest levels in heart, liver and ovary. Highly expressed in the suprachiasmatic nucleus (SCN).

The protein localises to the cytoplasm. Its subcellular location is the nucleus. Functionally, transcriptional repressor which forms a core component of the circadian clock. The circadian clock, an internal time-keeping system, regulates various physiological processes through the generation of approximately 24 hour circadian rhythms in gene expression, which are translated into rhythms in metabolism and behavior. It is derived from the Latin roots 'circa' (about) and 'diem' (day) and acts as an important regulator of a wide array of physiological functions including metabolism, sleep, body temperature, blood pressure, endocrine, immune, cardiovascular, and renal function. Consists of two major components: the central clock, residing in the suprachiasmatic nucleus (SCN) of the brain, and the peripheral clocks that are present in nearly every tissue and organ system. Both the central and peripheral clocks can be reset by environmental cues, also known as Zeitgebers (German for 'timegivers'). The predominant Zeitgeber for the central clock is light, which is sensed by retina and signals directly to the SCN. The central clock entrains the peripheral clocks through neuronal and hormonal signals, body temperature and feeding-related cues, aligning all clocks with the external light/dark cycle. Circadian rhythms allow an organism to achieve temporal homeostasis with its environment at the molecular level by regulating gene expression to create a peak of protein expression once every 24 hours to control when a particular physiological process is most active with respect to the solar day. Transcription and translation of core clock components (CLOCK, NPAS2, BMAL1, BMAL2, PER1, PER2, PER3, CRY1 and CRY2) plays a critical role in rhythm generation, whereas delays imposed by post-translational modifications (PTMs) are important for determining the period (tau) of the rhythms (tau refers to the period of a rhythm and is the length, in time, of one complete cycle). A diurnal rhythm is synchronized with the day/night cycle, while the ultradian and infradian rhythms have a period shorter and longer than 24 hours, respectively. Disruptions in the circadian rhythms contribute to the pathology of cardiovascular diseases, cancer, metabolic syndromes and aging. A transcription/translation feedback loop (TTFL) forms the core of the molecular circadian clock mechanism. Transcription factors, CLOCK or NPAS2 and BMAL1 or BMAL2, form the positive limb of the feedback loop, act in the form of a heterodimer and activate the transcription of core clock genes and clock-controlled genes (involved in key metabolic processes), harboring E-box elements (5'-CACGTG-3') within their promoters. The core clock genes: PER1/2/3 and CRY1/2 which are transcriptional repressors form the negative limb of the feedback loop and interact with the CLOCK|NPAS2-BMAL1|BMAL2 heterodimer inhibiting its activity and thereby negatively regulating their own expression. This heterodimer also activates nuclear receptors NR1D1/2 and RORA/B/G, which form a second feedback loop and which activate and repress BMAL1 transcription, respectively. CRY1 and CRY2 have redundant functions but also differential and selective contributions at least in defining the pace of the SCN circadian clock and its circadian transcriptional outputs. Less potent transcriptional repressor in cerebellum and liver than CRY1, though less effective in lengthening the period of the SCN oscillator. Seems to play a critical role in tuning SCN circadian period by opposing the action of CRY1. With CRY1, dispensable for circadian rhythm generation but necessary for the development of intercellular networks for rhythm synchrony. May mediate circadian regulation of cAMP signaling and gluconeogenesis by blocking glucagon-mediated increases in intracellular cAMP concentrations and in CREB1 phosphorylation. Besides its role in the maintenance of the circadian clock, is also involved in the regulation of other processes. Plays a key role in glucose and lipid metabolism modulation, in part, through the transcriptional regulation of genes involved in these pathways, such as LEP or ACSL4. Represses glucocorticoid receptor NR3C1/GR-induced transcriptional activity by binding to glucocorticoid response elements (GREs). Represses the CLOCK-BMAL1 induced transcription of BHLHE40/DEC1 and NAMPT. Represses PPARD and its target genes in the skeletal muscle and limits exercise capacity. Represses the transcriptional activity of NR1I2. The chain is Cryptochrome-2 (Cry2) from Rattus norvegicus (Rat).